The following is a 339-amino-acid chain: DNA-directed RNA polymerase subunit alpha (339 aa).

The segment at 1–233 (MVREEVAGST…DLFLPFLHAE (233 aa)) is alpha N-terminal domain (alpha-NTD). Residues 264–339 (KKGIPLNYIF…IDLLKNKLSF (76 aa)) form an alpha C-terminal domain (alpha-CTD) region.

This sequence belongs to the RNA polymerase alpha chain family. As to quaternary structure, in plastids the minimal PEP RNA polymerase catalytic core is composed of four subunits: alpha, beta, beta', and beta''. When a (nuclear-encoded) sigma factor is associated with the core the holoenzyme is formed, which can initiate transcription.

The protein resides in the plastid. It localises to the chloroplast. The catalysed reaction is RNA(n) + a ribonucleoside 5'-triphosphate = RNA(n+1) + diphosphate. In terms of biological role, DNA-dependent RNA polymerase catalyzes the transcription of DNA into RNA using the four ribonucleoside triphosphates as substrates. The polypeptide is DNA-directed RNA polymerase subunit alpha (Psathyrostachys rupestris (Hordeum rupestre)).